The sequence spans 411 residues: Gamma-glutamyl phosphate reductase (411 aa).

Belongs to the gamma-glutamyl phosphate reductase family.

It is found in the cytoplasm. The catalysed reaction is L-glutamate 5-semialdehyde + phosphate + NADP(+) = L-glutamyl 5-phosphate + NADPH + H(+). It functions in the pathway amino-acid biosynthesis; L-proline biosynthesis; L-glutamate 5-semialdehyde from L-glutamate: step 2/2. Functionally, catalyzes the NADPH-dependent reduction of L-glutamate 5-phosphate into L-glutamate 5-semialdehyde and phosphate. The product spontaneously undergoes cyclization to form 1-pyrroline-5-carboxylate. The sequence is that of Gamma-glutamyl phosphate reductase from Nautilia profundicola (strain ATCC BAA-1463 / DSM 18972 / AmH).